Here is a 430-residue protein sequence, read N- to C-terminus: Gamma-glutamyl phosphate reductase (430 aa).

This sequence belongs to the gamma-glutamyl phosphate reductase family.

The protein resides in the cytoplasm. It carries out the reaction L-glutamate 5-semialdehyde + phosphate + NADP(+) = L-glutamyl 5-phosphate + NADPH + H(+). It participates in amino-acid biosynthesis; L-proline biosynthesis; L-glutamate 5-semialdehyde from L-glutamate: step 2/2. Its function is as follows. Catalyzes the NADPH-dependent reduction of L-glutamate 5-phosphate into L-glutamate 5-semialdehyde and phosphate. The product spontaneously undergoes cyclization to form 1-pyrroline-5-carboxylate. The chain is Gamma-glutamyl phosphate reductase from Rhodopseudomonas palustris (strain ATCC BAA-98 / CGA009).